A 371-amino-acid polypeptide reads, in one-letter code: uncharacterized protein (371 aa).

The chain crosses the membrane as a helical span at residues 17–33 (FLLFSVVLIIVMTTLVF).

To S.pombe SpBC4C3.08 and SpBC4C3.09.

Its subcellular location is the membrane. This is an uncharacterized protein from Schizosaccharomyces pombe (strain 972 / ATCC 24843) (Fission yeast).